Reading from the N-terminus, the 180-residue chain is Inner membrane-spanning protein YciB (180 aa).

5 consecutive transmembrane segments (helical) span residues Q25–I45, V49–I69, I76–I96, I118–V138, and F150–L170.

Belongs to the YciB family.

It localises to the cell inner membrane. Its function is as follows. Plays a role in cell envelope biogenesis, maintenance of cell envelope integrity and membrane homeostasis. The polypeptide is Inner membrane-spanning protein YciB (Rickettsia akari (strain Hartford)).